The chain runs to 70 residues: Conotoxin Cl9.1 (70 aa).

Positions 1–20 are cleaved as a signal peptide; sequence MMGKLGVVLFICLVLFPLET. The propeptide occupies 21 to 50; sequence LQLEGGQQADRHVDQLEGNPNRETRTIEVR. 3 disulfide bridges follow: cysteine 51–cysteine 63, cysteine 56–cysteine 67, and cysteine 61–cysteine 70.

Belongs to the conotoxin M superfamily. As to expression, expressed by the venom duct.

It localises to the secreted. In Californiconus californicus (California cone), this protein is Conotoxin Cl9.1.